We begin with the raw amino-acid sequence, 875 residues long: MLIQFLTKIFSNHNNRILKKFKKIVLSVNKLEKNFEKLSDKELQAQTELFRLRLRNGETLDDILPEAFALVREASKRVFSMRHFDVQILGGIALNKQCIAEMRTGEGKTLTSTLPAYLNALNGKGVHIVTMNDYLARRDAEKNTPLFEFLGLTVGLNLSEMSFFSKRKAYLSDITYGTNNEYGFDYLRDNMVFSPEERVQRKLNYALVDEVDSILIDEARTPLIISGPSEDSSELYKEINKIVPFLNSQKKEDSDIFCGTGDFSIDEKSKQIYLTERGLIKVEKILFDKKLMNTGESLYSSNNIILMHHVLSALRAHKLFVRNVDYLVKDNSVIIVDEHTGRTMPGRRWSDGLHQAIEAKENVSIKNENQTLASITFQNYFRLYEKIAGMTGTAETESFEFNSIYNLDTIVIPTNRKMIRKDFPDLVYMTEKEKINAIIQDIQKCIKLNQPVLVGTVSIEKSEIISKELLKLNINHNVLNAKFHAKEAEIIAQAGKPGSITIATNMAGRGTDIVLGGNLEVELNKYKNITSRKIEEIKKKWQSEHDLVVSAGGLHIIGTERHESRRIDNQLRGRSGRQGDTGSSRFYLSMEDSLMRIFASDKIVHMMKKLGLAFNEAIEHSWVTKAIENAQKKVENRNFDIRKQLLEYDDVINEQRSAIYSQRNKLIDARDIKLMIYDIFKDVLKKNIILYIPKNTFHDKWNITDLKDKLNIDFYLNAPILDWINIEPNLTDKKIIKRIIDFARINYKNKEILIGSNNMRIIEKIIMLQTLDSLWKEHLAAVDYLRQGIHLRGYAQKDPKQEYKRESFNMFSSMLELLKFEVVSFLSRINSSYAKKYIDLNKHLVITHNNTMKISRNSPCLCGSGKKYKYCHGSL.

Residues Q87, 105–109 (GEGKT), and D512 each bind ATP. Residues C860, C862, C871, and H872 each contribute to the Zn(2+) site.

It belongs to the SecA family. In terms of assembly, monomer and homodimer. Part of the essential Sec protein translocation apparatus which comprises SecA, SecYEG and auxiliary proteins SecDF-YajC and YidC. Requires Zn(2+) as cofactor.

Its subcellular location is the cell inner membrane. It is found in the cytoplasm. It carries out the reaction ATP + H2O + cellular proteinSide 1 = ADP + phosphate + cellular proteinSide 2.. Its function is as follows. Part of the Sec protein translocase complex. Interacts with the SecYEG preprotein conducting channel. Has a central role in coupling the hydrolysis of ATP to the transfer of proteins into and across the cell membrane, serving both as a receptor for the preprotein-SecB complex and as an ATP-driven molecular motor driving the stepwise translocation of polypeptide chains across the membrane. This chain is Protein translocase subunit SecA, found in Buchnera aphidicola subsp. Acyrthosiphon pisum (strain APS) (Acyrthosiphon pisum symbiotic bacterium).